A 1169-amino-acid chain; its full sequence is Rabankyrin-5 (1169 aa).

Residue A2 is modified to N-acetylalanine. Positions 68-130 (SDLKIKVGDR…IYTDELEFRE (63 aa)) constitute a BTB domain. 5 ANK repeats span residues 217-247 (KTEY…QLPG), 255-284 (NGDL…DVDM), 288-317 (NGWS…LVNA), 322-362 (AQET…NPNM), and 366-396 (KGRT…DLEL). Residue S270 is modified to Phosphoserine. The NPF motif lies at 421–423 (NPF). 16 ANK repeats span residues 490-519 (WGET…NPNL), 542-572 (YLQT…ALHA), 588-617 (RDQT…SIND), 621-650 (DGQT…DINV), 654-683 (DGET…DMSV), 687-716 (KGNP…DATC), 724-753 (CLQT…DVNS), 769-798 (DGQT…NVNA), 802-832 (EGRT…ELSV), 836-865 (QGLT…GAAE), 870-899 (KGRN…NVNS), 905-934 (SKLT…KVNE), 938-967 (HRQT…DFAA), 971-1001 (NGNN…DAEA), 1005-1037 (RGQS…EYPL), and 1043-1072 (EGNT…RLGV). The segment at 650–759 (VRTQDGETAL…DVNSPRQPGT (110 aa)) is interaction with RHOD and RAB5A. The FYVE-type zinc-finger motif lies at 1104–1164 (WCDGSNCYEC…VCNICFDVLT (61 aa)). Residues C1110, C1113, C1126, C1129, C1134, C1137, C1156, and C1159 each contribute to the Zn(2+) site.

As to quaternary structure, interacts with RAB5A (in GTP-bound form). Interacts with RHOD (independent of GTP-loaded status). Interacts with EHD1. Interacts with VPS26A; the interaction is independent of EHD1 and is indicative for an association with the cargo recognition subcomplex of the retromer complex. In terms of tissue distribution, expressed in kidney proximal tubule epithelial cells; at protein level.

It localises to the cytoplasm. The protein resides in the endosome membrane. The protein localises to the cytoplasmic vesicle. Its function is as follows. Proposed effector of Rab5. Binds to phosphatidylinositol 3-phosphate (PI(3)P). Involved in homotypic early endosome fusion and to a lesser extent in heterotypic fusion of chlathrin-coated vesicles with early endosomes. Required for correct endosomal localization. Involved in the internalization and trafficking of activated tyrosine kinase receptors such as PDGFRB. Regulates the subcellular localization of the retromer complex in a EHD1-dependent manner. Involved in endosome-to-Golgi transport and biosynthetic transport to late endosomes and lysosomes indicative for a regulation of retromer complex-mediated retrograde transport. Involved in macropinocytosis; the function is dependent on Rab5-GTP. The chain is Rabankyrin-5 (Ankfy1) from Mus musculus (Mouse).